The sequence spans 489 residues: Ribulose bisphosphate carboxylase large chain 2 (489 aa).

Residues Asn128 and Thr178 each contribute to the substrate site. The Proton acceptor role is filled by Lys180. A substrate-binding site is contributed by Lys182. The Mg(2+) site is built by Lys206, Asp208, and Glu209. The residue at position 206 (Lys206) is an N6-carboxylysine. His298 acts as the Proton acceptor in catalysis. Substrate-binding residues include Arg299, His331, and Ser383.

It belongs to the RuBisCO large chain family. Type I subfamily. Heterohexadecamer of 8 large chains and 8 small chains. Requires Mg(2+) as cofactor.

The enzyme catalyses 2 (2R)-3-phosphoglycerate + 2 H(+) = D-ribulose 1,5-bisphosphate + CO2 + H2O. It catalyses the reaction D-ribulose 1,5-bisphosphate + O2 = 2-phosphoglycolate + (2R)-3-phosphoglycerate + 2 H(+). In terms of biological role, ruBisCO catalyzes two reactions: the carboxylation of D-ribulose 1,5-bisphosphate, the primary event in carbon dioxide fixation, as well as the oxidative fragmentation of the pentose substrate. Both reactions occur simultaneously and in competition at the same active site. This chain is Ribulose bisphosphate carboxylase large chain 2, found in Nitrobacter winogradskyi (strain ATCC 25391 / DSM 10237 / CIP 104748 / NCIMB 11846 / Nb-255).